Here is a 397-residue protein sequence, read N- to C-terminus: Protein shisa-8 (397 aa).

An N-terminal signal peptide occupies residues 1 to 38; sequence MARAGARGLLGGRRPPGLRLALALRLALLLARPPSGRA. Residues 39–138 lie on the Extracellular side of the membrane; sequence GAPEAQGPAA…APRDPGRERS (100 aa). N75 carries an N-linked (GlcNAc...) asparagine glycan. Positions 117 to 136 are disordered; it reads TGRPPARARDTAAPRDPGRE. A compositionally biased stretch (basic and acidic residues) spans 123–136; the sequence is RARDTAAPRDPGRE. Residues 139 to 159 form a helical membrane-spanning segment; that stretch reads HTAVYAVCGVAALLVLAGIGA. Over 160–397 the chain is Cytoplasmic; sequence RLGLERAHSP…RTNSKTEVTV (238 aa). Disordered regions lie at residues 182–250 and 281–303; these read LLKQ…GGSL and FPAL…PDLP. Pro residues-rich tracts occupy residues 188–197 and 288–303; these read PQEPLPPTLG and PRQP…PDLP.

This sequence belongs to the shisa family. In terms of assembly, interacts with AMPAR subunits GRIA1 and GRIA2.

It is found in the membrane. Functionally, may regulate trafficking and current kinetics of AMPA-type glutamate receptor (AMPAR) at synapses. The sequence is that of Protein shisa-8 from Homo sapiens (Human).